The chain runs to 144 residues: Mediator of RNA polymerase II transcription subunit 9 (144 aa).

A coiled-coil region spans residues 85–143; it reads QDCNHKIFELQKRFESAREQIRQLPGIDFNKEEQQQRLELLRNQLKLKQQLIRKYKDTE.

Belongs to the Mediator complex subunit 9 family. In terms of assembly, component of the Mediator complex.

It is found in the nucleus. In terms of biological role, component of the Mediator complex, a coactivator involved in the regulated transcription of nearly all RNA polymerase II-dependent genes. Mediator functions as a bridge to convey information from gene-specific regulatory proteins to the basal RNA polymerase II transcription machinery. Mediator is recruited to promoters by direct interactions with regulatory proteins and serves as a scaffold for the assembly of a functional preinitiation complex with RNA polymerase II and the general transcription factors. This Drosophila melanogaster (Fruit fly) protein is Mediator of RNA polymerase II transcription subunit 9 (MED9).